A 649-amino-acid chain; its full sequence is Vitamin K-dependent protein S (649 aa).

Positions 1–14 (SKQQASQVLVRKRR) are excised as a propeptide. Positions 15–60 (ANSMLEETKQGNLERECIEELCNKEEAREVFENDPETDYFYPKYLV) constitute a Gla domain. 11 positions are modified to 4-carboxyglutamate: glutamate 20, glutamate 21, glutamate 28, glutamate 30, glutamate 33, glutamate 34, glutamate 39, glutamate 40, glutamate 43, glutamate 46, and glutamate 50. Cysteine 31 and cysteine 36 are disulfide-bonded. Positions 61–89 (CLRSFQSGLFTAARQSTDAYPDLRSCVNA) are thrombin-sensitive. The EGF-like 1 domain occupies 90-128 (IPDQCSPLPCNEDGYMSCKDGKASFTCTCKPGWQGERCE). 13 disulfides stabilise this stretch: cysteine 94/cysteine 107, cysteine 99/cysteine 116, cysteine 118/cysteine 127, cysteine 134/cysteine 148, cysteine 144/cysteine 157, cysteine 159/cysteine 172, cysteine 178/cysteine 190, cysteine 185/cysteine 199, cysteine 201/cysteine 214, cysteine 220/cysteine 229, cysteine 225/cysteine 238, cysteine 240/cysteine 255, and cysteine 422/cysteine 448. (3R)-3-hydroxyaspartate is present on aspartate 109. The 44-residue stretch at 130–173 (DINECKDPSNINGGCSQICDNTPGSYHCSCKSGFVMLSNKKDCK) folds into the EGF-like 2; calcium-binding domain. An EGF-like 3; calcium-binding domain is found at 174–215 (DVDECSLKPNMCGTAVCKNIPGDFECECPEGYRYNLKSKSCE). In terms of domain architecture, EGF-like 4; calcium-binding spans 216–256 (DVDECSENMCAQLCVNYPGGYTCYCDGKKGFKLAQDQKSCE). 2 consecutive Laminin G-like domains span residues 272–448 (LLYL…NKHC) and 457–639 (YYPG…AHSC). N-linked (GlcNAc...) asparagine glycosylation is found at asparagine 472, asparagine 482, and asparagine 503. Residues cysteine 612 and cysteine 639 are joined by a disulfide bond.

Post-translationally, the iron and 2-oxoglutarate dependent 3-hydroxylation of aspartate and asparagine is (R) stereospecific within EGF domains. As to expression, plasma.

Its subcellular location is the secreted. In terms of biological role, anticoagulant plasma protein; it is a cofactor to activated protein C in the degradation of coagulation factors Va and VIIIa. It helps to prevent coagulation and stimulating fibrinolysis. The protein is Vitamin K-dependent protein S (PROS1) of Macaca mulatta (Rhesus macaque).